The primary structure comprises 557 residues: Carotenoid-cleaving dioxygenase, mitochondrial (557 aa).

Positions 203, 263, 334, and 551 each coordinate Fe cation.

The protein belongs to the carotenoid oxygenase family. The cofactor is Fe(2+).

It is found in the mitochondrion. The catalysed reaction is all-trans-beta-carotene + O2 = beta-ionone + all-trans-10'-apo-beta-carotenal. The enzyme catalyses 5-cis-lycopene + O2 = 5-cis-10'-apo-lycopenal + (3E,5E)-6,10-dimethylundeca-3,5,9-trien-2-one. It catalyses the reaction 13-cis-lycopene + O2 = 13-cis-10'-apo-lycopenal + (3E,5E)-6,10-dimethylundeca-3,5,9-trien-2-one. It carries out the reaction lutein + O2 = (3R,6R)-hydroxy-alpha-ionone + (3R)-3-hydroxy-10'-apo-beta-carotenal. The catalysed reaction is lutein + O2 = (3R,6R)-3-hydroxy-10'-apo-alpha-carotenal + (3R)-hydroxy-beta-ionone. The enzyme catalyses all-trans-zeaxanthin + 2 O2 = 4,9-dimethyldodeca-2,4,6,8,10-pentaenedial + 2 (3R)-hydroxy-beta-ionone. It catalyses the reaction all-trans-zeaxanthin + O2 = (3R)-3-hydroxy-10'-apo-beta-carotenal + (3R)-hydroxy-beta-ionone. It carries out the reaction beta-cryptoxanthin + O2 = all-trans-10'-apo-beta-carotenal + (3R)-hydroxy-beta-ionone. The catalysed reaction is all-trans-10'-apo-beta-carotenal + O2 = beta-ionone + 4,9-dimethyldodeca-2,4,6,8,10-pentaenedial. The enzyme catalyses (3R)-3-hydroxy-10'-apo-beta-carotenal + O2 = 4,9-dimethyldodeca-2,4,6,8,10-pentaenedial + (3R)-hydroxy-beta-ionone. It catalyses the reaction (3R,6R)-3-hydroxy-10'-apo-alpha-carotenal + O2 = (3R,6R)-hydroxy-alpha-ionone + 4,9-dimethyldodeca-2,4,6,8,10-pentaenedial. Its function is as follows. Broad specificity mitochondrial dioxygenase that mediates the asymmetric oxidative cleavage of carotenoids. Cleaves carotenes (pure hydrocarbon carotenoids) such as all-trans-beta-carotene and lycopene as well as xanthophylls (oxygenated carotenoids) such as zeaxanthin, lutein and beta-cryptoxanthin at both the 9,10 and the 9',10' carbon-carbon double bond. Through its function in carotenoids metabolism regulates oxidative stress and the production of important signaling molecules. The chain is Carotenoid-cleaving dioxygenase, mitochondrial from Pongo abelii (Sumatran orangutan).